A 275-amino-acid polypeptide reads, in one-letter code: MVRKIAIYGKGGIGKSTTTQNTVAAMAHFHDKKVFIHGCDPKADSTRLILHGKQQVTMMDTLREKGEDECTPDKVIEVGFGGVKCVESGGPEPGVGCAGRGVITAITLMEQHGVYEDDLDFVFFDVLGDVVCGGFAMPVRDGKADEIYVVASGEMMALYAANNICKGMVKYAEQSGVRLGGIICNSRNVDGELDLLQEFCDKIGTQLIHFVPRDNIVQKAEFQKKAVVDYDDTCNQALEYKELARKIIENENLVIPTPMTMDELEELTSKYGFLD.

G9–S16 is a binding site for ATP. C97 serves as a coordination point for [4Fe-4S] cluster. R100 carries the ADP-ribosylarginine; by dinitrogenase reductase ADP-ribosyltransferase modification. C132 serves as a coordination point for [4Fe-4S] cluster.

This sequence belongs to the NifH/BchL/ChlL family. In terms of assembly, homodimer. It depends on [4Fe-4S] cluster as a cofactor. The reversible ADP-ribosylation of Arg-100 inactivates the nitrogenase reductase and regulates nitrogenase activity.

The enzyme catalyses N2 + 8 reduced [2Fe-2S]-[ferredoxin] + 16 ATP + 16 H2O = H2 + 8 oxidized [2Fe-2S]-[ferredoxin] + 2 NH4(+) + 16 ADP + 16 phosphate + 6 H(+). Functionally, the key enzymatic reactions in nitrogen fixation are catalyzed by the nitrogenase complex, which has 2 components: the iron protein and the molybdenum-iron protein. This is Nitrogenase iron protein (nifH) from Methanococcus maripaludis (Methanococcus deltae).